A 432-amino-acid chain; its full sequence is Competence protein ComFA (432 aa).

Zn(2+)-binding residues include Cys40, Cys43, Cys60, and Cys63. The Helicase ATP-binding domain maps to 107 to 257 (LQAVDKQKPT…RLGELKRLNL (151 aa)). 120–127 (AVTGAGKT) is a binding site for ATP. Residues 205-208 (DEVD) carry the DEAD box motif. The region spanning 289–432 (KLKSYIEKQR…IQMMNKEAGL (144 aa)) is the Helicase C-terminal domain.

Belongs to the DEAD box helicase family. As to quaternary structure, monomer and dimer in solution. Interacts with DprA and ComFC; ComFA-ComFC form rings about 150 Angstroms in diameter with apparent 6-fold symmetry. Requires Zn(2+) as cofactor.

The protein localises to the cytoplasm. Its function is as follows. Involved in transformation (genetic competence for DNA uptake). DNA uptake is energy dependent, this protein may provide the driving force for DNA uptake. Does not have helicase activity, translocates on single-stranded (ss)DNA in a 5'-3' direction in an ATP-dependent manner, but does not unwind double-stranded (ds)DNA (tested with 5'- and 3'-overhang dsDNA). ATP hydrolysis causes the release of ssDNA from ComFA. A ssDNA-stimulated ATPase; dsDNA does not stimulate ATPase. ATP hydrolysis causes the release of ssDNA from ComFA. ComFC has no effect on ATPase activity. Binds ssDNA but only very poorly to dsDNA in the absence of ATP. Binding to ssDNA does not require free DNA ends. This Streptococcus pneumoniae (strain ATCC BAA-255 / R6) protein is Competence protein ComFA.